The sequence spans 209 residues: Large ribosomal subunit protein uL3 (209 aa).

This sequence belongs to the universal ribosomal protein uL3 family. Part of the 50S ribosomal subunit. Forms a cluster with proteins L14 and L19.

One of the primary rRNA binding proteins, it binds directly near the 3'-end of the 23S rRNA, where it nucleates assembly of the 50S subunit. The protein is Large ribosomal subunit protein uL3 of Pelobacter propionicus (strain DSM 2379 / NBRC 103807 / OttBd1).